The chain runs to 723 residues: Nucleolar protein 11 (723 aa).

The protein resides in the nucleus. Its subcellular location is the nucleolus. Its function is as follows. Ribosome biogenesis factor. May be required for both optimal rDNA transcription and pre-rRNA processing. This chain is Nucleolar protein 11 (NOL11), found in Gallus gallus (Chicken).